Reading from the N-terminus, the 245-residue chain is Chloride intracellular channel protein 2 (245 aa).

Positions 1-96 (MASLALNTQA…EEFLEKTLAP (96 aa)) are required for insertion into the membrane. Position 25 (glutamate 25) interacts with glutathione. The short motif at 30–33 (CPFC) is the G-site element. The cysteines at positions 30 and 33 are disulfide-linked. The chain crosses the membrane as a helical span at residues 32-52 (FCQRLFMILWLKGVKFNVTTI). One can recognise a GST C-terminal domain in the interval 76 to 239 (NKELKTDFIK…PEDKEIENTY (164 aa)). Residue histidine 227 participates in glutathione binding.

Belongs to the chloride channel CLIC family. In terms of assembly, monomer. Interacts with TRAPPC2 and RYR2.

It is found in the cytoplasm. Its subcellular location is the membrane. It catalyses the reaction chloride(in) = chloride(out). It carries out the reaction tert-butyl hydroperoxide + 2 glutathione = tert-butanol + glutathione disulfide + H2O. The enzyme catalyses cumene hydroperoxide + 2 glutathione = 2-phenylpropan-2-ol + glutathione disulfide + H2O. Its function is as follows. In the soluble state, catalyzes glutaredoxin-like thiol disulfide exchange reactions with reduced glutathione as electron donor. Displays weak glutathione peroxidase activity. Can insert into membranes and form chloride ion channels. Membrane insertion seems to be redox-regulated and may occur only under oxidizing conditions. Modulates the activity of RYR2 and inhibits calcium influx. In Rattus norvegicus (Rat), this protein is Chloride intracellular channel protein 2.